The following is a 629-amino-acid chain: Ras GTPase-activating protein gap-1 (629 aa).

The Ras-GAP domain occupies 183–398 (DRIRPVLSSL…SVMASFLDNI (216 aa)). A PH domain is found at 411–507 (TVFKFGNLQQ…WLNAIERQRN (97 aa)).

It is found in the cytoplasm. GTPase-activating protein, which inhibits the vulval induction by acting as a negative regulator for the member of the Ras family let-60. Probably decreases the signaling activity of Ras by stimulating its intrinsic GTPase activity, thereby lowering the levels of GTP-bound, active Ras. This is Ras GTPase-activating protein gap-1 (gap-1) from Caenorhabditis elegans.